A 186-amino-acid chain; its full sequence is Ribosome-recycling factor (186 aa).

The protein belongs to the RRF family.

It is found in the cytoplasm. Responsible for the release of ribosomes from messenger RNA at the termination of protein biosynthesis. May increase the efficiency of translation by recycling ribosomes from one round of translation to another. The chain is Ribosome-recycling factor from Wolinella succinogenes (strain ATCC 29543 / DSM 1740 / CCUG 13145 / JCM 31913 / LMG 7466 / NCTC 11488 / FDC 602W) (Vibrio succinogenes).